A 451-amino-acid chain; its full sequence is F-box only protein 47 (451 aa).

Positions 41–91 constitute an F-box domain; sequence LGNFKVLPLEILHIILRYLSVKDIGMLSMVSKTVSQHIINYISTSSGSRRL.

In terms of assembly, part of a SCF (SKP1-cullin-F-box) protein ligase complex.

In terms of biological role, probably recognizes and binds to some phosphorylated proteins and promotes their ubiquitination and degradation. The chain is F-box only protein 47 (Fbxo47) from Mus musculus (Mouse).